The chain runs to 453 residues: Ribose 1,5-bisphosphate phosphokinase PhnN (453 aa).

A disordered region spans residues 1–21 (MHGSTGFVQGTRPAGDQADPL). The tract at residues 1–271 (MHGSTGFVQG…SGQGERASLP (271 aa)) is unknown. The ribose 1,5-bisphosphokinase stretch occupies residues 272–453 (HSGRIFFCVG…KLLDILRQAK (182 aa)).

The protein in the C-terminal section; belongs to the ribose 1,5-bisphosphokinase family.

The catalysed reaction is alpha-D-ribose 1,5-bisphosphate + ATP = 5-phospho-alpha-D-ribose 1-diphosphate + ADP. It participates in metabolic intermediate biosynthesis; 5-phospho-alpha-D-ribose 1-diphosphate biosynthesis; 5-phospho-alpha-D-ribose 1-diphosphate from D-ribose 5-phosphate (route II): step 3/3. Its function is as follows. Catalyzes the phosphorylation of ribose 1,5-bisphosphate to 5-phospho-D-ribosyl alpha-1-diphosphate (PRPP). The polypeptide is Ribose 1,5-bisphosphate phosphokinase PhnN (phnN) (Janthinobacterium sp. (strain Marseille) (Minibacterium massiliensis)).